The following is a 551-amino-acid chain: MKANHIRILLLVTIAIMLISLMGRWEQTFPSNSSQSQTTQTQQDNSHYNSDTPATTNVSTSDAKASLTKTTSFSKYDDAKSVTINTDVFKNLKISLLDGAIISASLEDYSVSLDDKTPMALLTDEQGSEYIAKSTIVINKKPVDVNFESQGIKKENGKQVLTLTGSVDGLEITRTYTFDDAKYNISVSQNIKNTTSEPVSVIIDDSLARDFNPAGDSFSLLNAHSYTFTGVAYSTANDSFRKESFKDISKTNGQPTVINSQGLGWVAFIQHYFVSAWIPQSNDSKIYYKNLNNDVFEAGAYTGISIAPNQSESIDSVLYSGPIIKANLVDLAPNLEKTLDYGMLSFFSEIIFWVMNQIHSLVGNWGLAIILVTCLIKLIFYPLSAKSYRSMAKMRMLQPRVKRLQETYKDDRQVLGKKMMEMYKEEKVNPLSGCLPMLIQIPIFISLYWVLLESVELRQAPFIFWIHDLSMKDPYFVLPILMGISMFLQQKLSPAPADPMQAKIMMFLPVIFTFLFASFPSGLVLYWLTNNVISILQQWIITRHYQATHKK.

A helical membrane pass occupies residues 3–23 (ANHIRILLLVTIAIMLISLMG). Low complexity predominate over residues 30–43 (PSNSSQSQTTQTQQ). Positions 30-61 (PSNSSQSQTTQTQQDNSHYNSDTPATTNVSTS) are disordered. A compositionally biased stretch (polar residues) spans 44-61 (DNSHYNSDTPATTNVSTS). Helical transmembrane passes span 361–381 (LVGN…LIFY), 431–451 (LSGC…YWVL), and 504–524 (IMMF…SGLV).

The protein belongs to the OXA1/ALB3/YidC family. Type 1 subfamily. As to quaternary structure, interacts with the Sec translocase complex via SecD. Specifically interacts with transmembrane segments of nascent integral membrane proteins during membrane integration.

It is found in the cell inner membrane. Functionally, required for the insertion and/or proper folding and/or complex formation of integral membrane proteins into the membrane. Involved in integration of membrane proteins that insert both dependently and independently of the Sec translocase complex, as well as at least some lipoproteins. Aids folding of multispanning membrane proteins. The chain is Membrane protein insertase YidC from Francisella philomiragia subsp. philomiragia (strain ATCC 25017 / CCUG 19701 / FSC 153 / O#319-036).